Consider the following 596-residue polypeptide: Aspartate--tRNA(Asp/Asn) ligase (596 aa).

Residue glutamate 172 participates in L-aspartate binding. The interval 196–199 (QLFK) is aspartate. Arginine 218 lines the L-aspartate pocket. Residues 218–220 (RDE) and glutamine 227 each bind ATP. Histidine 450 contributes to the L-aspartate binding site. Glutamate 484 provides a ligand contact to ATP. Residue arginine 491 coordinates L-aspartate. Residue 536–539 (GLDR) coordinates ATP.

This sequence belongs to the class-II aminoacyl-tRNA synthetase family. Type 1 subfamily. As to quaternary structure, homodimer.

It localises to the cytoplasm. It catalyses the reaction tRNA(Asx) + L-aspartate + ATP = L-aspartyl-tRNA(Asx) + AMP + diphosphate. Its function is as follows. Aspartyl-tRNA synthetase with relaxed tRNA specificity since it is able to aspartylate not only its cognate tRNA(Asp) but also tRNA(Asn). Reaction proceeds in two steps: L-aspartate is first activated by ATP to form Asp-AMP and then transferred to the acceptor end of tRNA(Asp/Asn). The chain is Aspartate--tRNA(Asp/Asn) ligase from Acidithiobacillus ferrooxidans (strain ATCC 23270 / DSM 14882 / CIP 104768 / NCIMB 8455) (Ferrobacillus ferrooxidans (strain ATCC 23270)).